Consider the following 1034-residue polypeptide: Presequence protease, mitochondrial (1034 aa).

A mitochondrion-targeting transit peptide spans 1-29 (MLKGGMLSRWKMWSPQYKILRNHLINFKS). H128 contacts Zn(2+). E131 (proton acceptor) is an active-site residue. Zn(2+)-binding residues include H132 and E229.

This sequence belongs to the peptidase M16 family. PreP subfamily. Homodimer. Zn(2+) is required as a cofactor.

It localises to the mitochondrion. In terms of biological role, ATP-independent protease that degrades mitochondrial transit peptides after their cleavage. Also degrades other unstructured peptides. This is Presequence protease, mitochondrial from Drosophila melanogaster (Fruit fly).